A 246-amino-acid chain; its full sequence is Bis(5'-nucleosyl)-tetraphosphatase PrpE [asymmetrical] (246 aa).

It belongs to the PrpE family. It depends on Ni(2+) as a cofactor.

The catalysed reaction is P(1),P(4)-bis(5'-guanosyl) tetraphosphate + H2O = GMP + GTP + 2 H(+). Functionally, asymmetrically hydrolyzes Ap4p to yield AMP and ATP. This Bacillus anthracis (strain A0248) protein is Bis(5'-nucleosyl)-tetraphosphatase PrpE [asymmetrical].